The following is a 1642-amino-acid chain: Coiled-coil domain-containing protein 7A (1642 aa).

The disordered stretch occupies residues 21–51; the sequence is PYKKGLLNSSPKPKEKHNAKSKYGKNESMVL. The LRR 1 repeat unit spans residues 161–184; sequence VNQMEEISKDQSNLEELQSDGKTA. Residues 279 to 330 are a coiled coil; it reads LEKALNDQQTIESKYKQLETDFQMLIMEKTLLEAEIRRLREIERVKSAAKEE. The LRR 2 repeat unit spans residues 1310 to 1333; the sequence is IKELSKTLNLDGGDIELSDFVFKT.

In terms of tissue distribution, exclusively expressed in the testes.

This is Coiled-coil domain-containing protein 7A from Mus musculus (Mouse).